Here is a 134-residue protein sequence, read N- to C-terminus: Small ribosomal subunit protein bS16 (134 aa).

Positions 80 to 134 (GLAKRPTRSNPTKGEPGKKAQERLAMAKQAEEEAAAKAAEAAAAAAAPAEEAASE) are disordered. Residues 115-134 (AKAAEAAAAAAAPAEEAASE) are compositionally biased toward low complexity.

The protein belongs to the bacterial ribosomal protein bS16 family.

In Brucella anthropi (strain ATCC 49188 / DSM 6882 / CCUG 24695 / JCM 21032 / LMG 3331 / NBRC 15819 / NCTC 12168 / Alc 37) (Ochrobactrum anthropi), this protein is Small ribosomal subunit protein bS16.